Here is a 185-residue protein sequence, read N- to C-terminus: Ribosome-recycling factor (185 aa).

The protein belongs to the RRF family.

Its subcellular location is the cytoplasm. In terms of biological role, responsible for the release of ribosomes from messenger RNA at the termination of protein biosynthesis. May increase the efficiency of translation by recycling ribosomes from one round of translation to another. The sequence is that of Ribosome-recycling factor from Syntrophobacter fumaroxidans (strain DSM 10017 / MPOB).